The chain runs to 95 residues: Co-chaperonin GroES (95 aa).

The tract at residues 20 to 45 is disordered; it reads KTKGGLIIPDSAKEKPAEGEITSVGE.

Belongs to the GroES chaperonin family. Heptamer of 7 subunits arranged in a ring. Interacts with the chaperonin GroEL.

It is found in the cytoplasm. Its function is as follows. Together with the chaperonin GroEL, plays an essential role in assisting protein folding. The GroEL-GroES system forms a nano-cage that allows encapsulation of the non-native substrate proteins and provides a physical environment optimized to promote and accelerate protein folding. GroES binds to the apical surface of the GroEL ring, thereby capping the opening of the GroEL channel. This Paracoccus denitrificans protein is Co-chaperonin GroES.